The following is an 87-amino-acid chain: Large ribosomal subunit protein bL31B (87 aa).

This sequence belongs to the bacterial ribosomal protein bL31 family. Type B subfamily. As to quaternary structure, part of the 50S ribosomal subunit.

In Pseudomonas paraeruginosa (strain DSM 24068 / PA7) (Pseudomonas aeruginosa (strain PA7)), this protein is Large ribosomal subunit protein bL31B.